The following is a 466-amino-acid chain: MIKVYNTLNKKKEEFIPLTPGEVKMYVCGPTVYNFFHIGNGRTFIVFDTIRRYFEYRGFKVDFVQNFTDIDDKMIKKANEEGITVKKIGDTYIKEYYQDADALNIERATVNPRATEFIGEIIKFVKGLVDKGYAYEVDGDVYFSTKKFEGYGKLSGQNIEDLQSGARISVDERKKDPMDFAIWKAQKPGEPAWNSPWGMGRPGWHIECSCMAKKLLGETIDIHAGGSDLKFPHHENEIAQSEALTGEPFARYWLHSAFVNVNNEKMSKSLNNFFTAREILERYDADVIRFLMLSAHYRQQLNFSEDLLESAKASVERIYNAIGNLENLIDEVSREEMNEEEKAYLESLNKYKEKYIEKMDDDFNTADAITAIFDLIKDTNTNITIDSSKELAQKALELIRELGAPLGMFQKSTKGNLEEEIEALIAKRQQARKDRDFALADKIRDELKDRGIVLEDTPQGVRWKRI.

Position 28 (cysteine 28) interacts with Zn(2+). The 'HIGH' region signature appears at 30–40; it reads PTVYNFFHIGN. Zn(2+) is bound by residues cysteine 208, histidine 233, and glutamate 237. The 'KMSKS' region signature appears at 265–269; sequence KMSKS. An ATP-binding site is contributed by lysine 268.

It belongs to the class-I aminoacyl-tRNA synthetase family. As to quaternary structure, monomer. Zn(2+) is required as a cofactor.

The protein resides in the cytoplasm. It carries out the reaction tRNA(Cys) + L-cysteine + ATP = L-cysteinyl-tRNA(Cys) + AMP + diphosphate. In Clostridium perfringens (strain SM101 / Type A), this protein is Cysteine--tRNA ligase.